Reading from the N-terminus, the 388-residue chain is Succinate--CoA ligase [ADP-forming] subunit beta (388 aa).

In terms of domain architecture, ATP-grasp spans 9-244; sequence KQLFREYGLP…TTQDDEREMH (236 aa). Residues lysine 46, 53 to 55, glutamate 99, serine 102, and glutamate 107 each bind ATP; that span reads GRG. Mg(2+)-binding residues include asparagine 199 and aspartate 213. Substrate-binding positions include asparagine 264 and 321-323; that span reads GIV.

Belongs to the succinate/malate CoA ligase beta subunit family. Heterotetramer of two alpha and two beta subunits. Mg(2+) serves as cofactor.

It carries out the reaction succinate + ATP + CoA = succinyl-CoA + ADP + phosphate. The enzyme catalyses GTP + succinate + CoA = succinyl-CoA + GDP + phosphate. It functions in the pathway carbohydrate metabolism; tricarboxylic acid cycle; succinate from succinyl-CoA (ligase route): step 1/1. Functionally, succinyl-CoA synthetase functions in the citric acid cycle (TCA), coupling the hydrolysis of succinyl-CoA to the synthesis of either ATP or GTP and thus represents the only step of substrate-level phosphorylation in the TCA. The beta subunit provides nucleotide specificity of the enzyme and binds the substrate succinate, while the binding sites for coenzyme A and phosphate are found in the alpha subunit. The polypeptide is Succinate--CoA ligase [ADP-forming] subunit beta (Psychromonas ingrahamii (strain DSM 17664 / CCUG 51855 / 37)).